Reading from the N-terminus, the 1451-residue chain is ARF guanine-nucleotide exchange factor GNOM (1451 aa).

The DCB domain stretch occupies residues 1-246 (MGRLKLHSGI…VNRAGSIKQE (246 aa)). The SEC7 domain occupies 557-752 (RRKYIKRRLM…NEIRTTPEQG (196 aa)). Residue Glu-658 is part of the active site. The disordered stretch occupies residues 1430-1451 (SQLGDDETVSNGLSSPENTTGS).

As to quaternary structure, homodimer. Interacts with CYP19-4/CYP5 in vitro. In terms of tissue distribution, stems, leaves, flowers, siliques, floral inflorescence and roots. Expressed in the whole plant (at the protein level).

Its subcellular location is the cytoplasm. It is found in the cytosol. It localises to the endosome membrane. The protein resides in the cell membrane. Inhibited by brefeldin A (BFA). Activates the ARF proteins by exchanging bound GDP for free GTP. Plays a role in vesicular protein sorting. Acts as the major regulator of endosomal vesicle trafficking but is also involved in the endocytosis process. Could function redundantly with GNL1 in the retrograde Golgi to endoplasmic reticulum trafficking. Regulates vesicle trafficking required for the coordinated polar localization of auxin efflux carriers which in turn determines the direction of auxin flow. Mediates the sorting of PIN1 from endosomal compartments to the basal plasma membrane and the polarization of PIN3 to the bottom side of hypocotyl endodermal cells. Involved in the specification of apical-basal pattern formation in the early embryo and during root formation. Required for correct cell wall organization leading to normal cell adhesion during seedling development. Also plays an essential role in hydrotropism of seedling roots. This Arabidopsis thaliana (Mouse-ear cress) protein is ARF guanine-nucleotide exchange factor GNOM (GN).